The sequence spans 24 residues: Waglerin-3 (24 aa).

Basic and acidic residues predominate over residues 1–10 (SLGGKPDLRP). Residues 1–24 (SLGGKPDLRPCHPPCHYIPRPKPR) form a disordered region. Cys11 and Cys15 are disulfide-bonded.

It belongs to the waglerin family. Waglerin-1 is monomeric. In terms of processing, amidation of the waglerin-1 C-terminus increases the affinity by 2-fold. As to expression, expressed by the venom gland.

The protein resides in the secreted. Functionally, waglerin-1 selectively blocks the epsilon subunit of muscle nicotinic acetylcholine receptor (nAChR). Also has effects on rodent ionotropic GABA(A) receptors (GABR), since it potentiates I(GABA) in some neurons and depresses I(GABA) in others. In mice, it elicits tachypnea, ocular proptosis, rapid collapse and spasms, whereas no toxic effects on respiration and blood pressure are observed in rats. Its function is as follows. Waglerin-3 selectively blocks the epsilon subunit of muscle nicotinic acetylcholine receptor (nAChR). It elicits tachypnea, ocular proptosis, rapid collapse and spasms in mice. It causes death by respiratory failure. This Tropidolaemus wagleri (Wagler's pit viper) protein is Waglerin-3.